A 449-amino-acid polypeptide reads, in one-letter code: Metacaspase-1 (449 aa).

Residues 1–132 form a disordered region; the sequence is MFPGQGRHTY…YSRPPTNQQS (132 aa). Low complexity predominate over residues 10-26; the sequence is YGGQQQLLQLQQYNYGP. A compositionally biased stretch (pro residues) spans 27–55; the sequence is PQGPPPNGYGPPPGPPPNGYGPPPGPPPQ. Residues 56–66 show a composition bias toward polar residues; the sequence is NSWGYGNPSGT. 2 stretches are compositionally biased toward low complexity: residues 67-91 and 98-112; these read QSSN…YQRP and QSGN…NGEP. Positions 119–132 are enriched in polar residues; sequence GSGQYSRPPTNQQS. Residues His-232 and Cys-293 contribute to the active site.

The protein belongs to the peptidase C14B family.

Its function is as follows. Involved in cell death (apoptosis). In Lodderomyces elongisporus (strain ATCC 11503 / CBS 2605 / JCM 1781 / NBRC 1676 / NRRL YB-4239) (Yeast), this protein is Metacaspase-1 (MCA1).